The primary structure comprises 283 residues: Pantothenate synthetase (283 aa).

30–37 lines the ATP pocket; sequence MGYLHEGH. The active-site Proton donor is the His37. Gln61 contributes to the (R)-pantoate binding site. Gln61 is a beta-alanine binding site. 147-150 contributes to the ATP binding site; the sequence is GRKD. Gln153 contributes to the (R)-pantoate binding site. ATP is bound by residues Val176 and 184-187; that span reads MSSR.

This sequence belongs to the pantothenate synthetase family. As to quaternary structure, homodimer.

It localises to the cytoplasm. It catalyses the reaction (R)-pantoate + beta-alanine + ATP = (R)-pantothenate + AMP + diphosphate + H(+). It functions in the pathway cofactor biosynthesis; (R)-pantothenate biosynthesis; (R)-pantothenate from (R)-pantoate and beta-alanine: step 1/1. Catalyzes the condensation of pantoate with beta-alanine in an ATP-dependent reaction via a pantoyl-adenylate intermediate. The protein is Pantothenate synthetase of Syntrophotalea carbinolica (strain DSM 2380 / NBRC 103641 / GraBd1) (Pelobacter carbinolicus).